A 280-amino-acid polypeptide reads, in one-letter code: uncharacterized protein (280 aa).

Residues Met-1–Ala-21 form the signal peptide.

This sequence to M.leprae ML2432 and S.coelicolor SCO3347.

This is an uncharacterized protein from Mycobacterium tuberculosis (strain CDC 1551 / Oshkosh).